A 190-amino-acid chain; its full sequence is Orotate phosphoribosyltransferase (190 aa).

114 to 122 (EDVVTTGGS) contacts 5-phospho-alpha-D-ribose 1-diphosphate. 2 residues coordinate orotate: T118 and R146.

The protein belongs to the purine/pyrimidine phosphoribosyltransferase family. PyrE subfamily. In terms of assembly, homodimer. The cofactor is Mg(2+).

It carries out the reaction orotidine 5'-phosphate + diphosphate = orotate + 5-phospho-alpha-D-ribose 1-diphosphate. The protein operates within pyrimidine metabolism; UMP biosynthesis via de novo pathway; UMP from orotate: step 1/2. Its function is as follows. Catalyzes the transfer of a ribosyl phosphate group from 5-phosphoribose 1-diphosphate to orotate, leading to the formation of orotidine monophosphate (OMP). The sequence is that of Orotate phosphoribosyltransferase from Caldanaerobacter subterraneus subsp. tengcongensis (strain DSM 15242 / JCM 11007 / NBRC 100824 / MB4) (Thermoanaerobacter tengcongensis).